Reading from the N-terminus, the 674-residue chain is ATP-dependent DNA helicase Hel308 (674 aa).

Residues Gln27 and 44-51 (VPTAAGKT) contribute to the ATP site. A Helicase ATP-binding domain is found at 31 to 197 (IEQFRKGKNI…WLNASLIKSS (167 aa)). Positions 142–145 (DEIH) match the DEAH box motif. A Helicase C-terminal domain is found at 224 to 411 (DINLLVKETV…PEKVRFNTLA (188 aa)).

The protein belongs to the helicase family. Hel308 subfamily. As to quaternary structure, monomer.

The enzyme catalyses Couples ATP hydrolysis with the unwinding of duplex DNA by translocating in the 3'-5' direction.. It catalyses the reaction ATP + H2O = ADP + phosphate + H(+). Functionally, DNA-dependent ATPase and 3'-5' DNA helicase that may be involved in repair of stalled replication forks. The polypeptide is ATP-dependent DNA helicase Hel308 (Thermoplasma volcanium (strain ATCC 51530 / DSM 4299 / JCM 9571 / NBRC 15438 / GSS1)).